A 465-amino-acid polypeptide reads, in one-letter code: Phenylalanine--tRNA ligase alpha subunit (465 aa).

L-phenylalanine contacts are provided by Thr-311 and Phe-389. Mg(2+) is bound at residue Glu-391.

Belongs to the class-II aminoacyl-tRNA synthetase family. Phe-tRNA synthetase alpha subunit type 2 subfamily. In terms of assembly, tetramer of two alpha and two beta subunits. Mg(2+) is required as a cofactor.

The protein resides in the cytoplasm. It carries out the reaction tRNA(Phe) + L-phenylalanine + ATP = L-phenylalanyl-tRNA(Phe) + AMP + diphosphate + H(+). The sequence is that of Phenylalanine--tRNA ligase alpha subunit from Metallosphaera sedula (strain ATCC 51363 / DSM 5348 / JCM 9185 / NBRC 15509 / TH2).